Reading from the N-terminus, the 397-residue chain is 2,3-bisphosphoglycerate-independent phosphoglycerate mutase (397 aa).

Belongs to the BPG-independent phosphoglycerate mutase family. A-PGAM subfamily.

The catalysed reaction is (2R)-2-phosphoglycerate = (2R)-3-phosphoglycerate. It participates in carbohydrate degradation; glycolysis; pyruvate from D-glyceraldehyde 3-phosphate: step 3/5. Functionally, catalyzes the interconversion of 2-phosphoglycerate and 3-phosphoglycerate. The protein is 2,3-bisphosphoglycerate-independent phosphoglycerate mutase of Methanosarcina acetivorans (strain ATCC 35395 / DSM 2834 / JCM 12185 / C2A).